We begin with the raw amino-acid sequence, 289 residues long: 4-hydroxy-3-methylbut-2-enyl diphosphate reductase (289 aa).

Residue Cys13 coordinates [4Fe-4S] cluster. (2E)-4-hydroxy-3-methylbut-2-enyl diphosphate is bound by residues His42 and His74. 2 residues coordinate dimethylallyl diphosphate: His42 and His74. Isopentenyl diphosphate is bound by residues His42 and His74. Position 96 (Cys96) interacts with [4Fe-4S] cluster. His124 contacts (2E)-4-hydroxy-3-methylbut-2-enyl diphosphate. Dimethylallyl diphosphate is bound at residue His124. Position 124 (His124) interacts with isopentenyl diphosphate. Glu126 serves as the catalytic Proton donor. Residue Thr165 participates in (2E)-4-hydroxy-3-methylbut-2-enyl diphosphate binding. Residue Cys193 participates in [4Fe-4S] cluster binding. Residues Ser221, Asn223, and Ser265 each contribute to the (2E)-4-hydroxy-3-methylbut-2-enyl diphosphate site. Residues Ser221, Asn223, and Ser265 each coordinate dimethylallyl diphosphate. Isopentenyl diphosphate contacts are provided by Ser221, Asn223, and Ser265.

Belongs to the IspH family. The cofactor is [4Fe-4S] cluster.

It catalyses the reaction isopentenyl diphosphate + 2 oxidized [2Fe-2S]-[ferredoxin] + H2O = (2E)-4-hydroxy-3-methylbut-2-enyl diphosphate + 2 reduced [2Fe-2S]-[ferredoxin] + 2 H(+). It carries out the reaction dimethylallyl diphosphate + 2 oxidized [2Fe-2S]-[ferredoxin] + H2O = (2E)-4-hydroxy-3-methylbut-2-enyl diphosphate + 2 reduced [2Fe-2S]-[ferredoxin] + 2 H(+). Its pathway is isoprenoid biosynthesis; dimethylallyl diphosphate biosynthesis; dimethylallyl diphosphate from (2E)-4-hydroxy-3-methylbutenyl diphosphate: step 1/1. It functions in the pathway isoprenoid biosynthesis; isopentenyl diphosphate biosynthesis via DXP pathway; isopentenyl diphosphate from 1-deoxy-D-xylulose 5-phosphate: step 6/6. With respect to regulation, highly sensitive to dioxygen. Catalyzes the conversion of 1-hydroxy-2-methyl-2-(E)-butenyl 4-diphosphate (HMBPP) into a mixture of isopentenyl diphosphate (IPP) and dimethylallyl diphosphate (DMAPP). Acts in the terminal step of the DOXP/MEP pathway for isoprenoid precursor biosynthesis. This is 4-hydroxy-3-methylbut-2-enyl diphosphate reductase from Aquifex aeolicus (strain VF5).